A 235-amino-acid polypeptide reads, in one-letter code: Flagellar L-ring protein (235 aa).

Positions 1 to 18 (MNKIAGTLFLLAGLAMAG) are cleaved as a signal peptide. A lipid anchor (N-palmitoyl cysteine) is attached at Cys19. Residue Cys19 is the site of S-diacylglycerol cysteine attachment.

This sequence belongs to the FlgH family. The basal body constitutes a major portion of the flagellar organelle and consists of four rings (L,P,S, and M) mounted on a central rod.

It localises to the cell outer membrane. The protein resides in the bacterial flagellum basal body. Functionally, assembles around the rod to form the L-ring and probably protects the motor/basal body from shearing forces during rotation. This Chelativorans sp. (strain BNC1) protein is Flagellar L-ring protein.